The chain runs to 418 residues: Deubiquitinase and deneddylase Dub1 (418 aa).

Residues Met1–Lys10 are compositionally biased toward polar residues. A disordered region spans residues Met1 to Val23. A helical membrane pass occupies residues Thr40 to Phe60. Positions Ser75–Lys145 are disordered. Positions Glu86–Pro141 are enriched in pro residues. Residues His288, Asp305, and Cys358 contribute to the active site.

The protein belongs to the peptidase C48 family.

The protein resides in the secreted. It is found in the host cell. It localises to the membrane. Effector proteins function to alter host cell physiology and promote bacterial survival in host tissues. This protease possesses deubiquitinating and deneddylating activities. The chain is Deubiquitinase and deneddylase Dub1 (cdu1) from Chlamydia trachomatis serovar A (strain ATCC VR-571B / DSM 19440 / HAR-13).